Consider the following 521-residue polypeptide: AAA ATPase forming ring-shaped complexes (521 aa).

A coiled-coil region spans residues 4–44 (TEDLAALNDRLMAKNHALAEALSRAGKELTKAKSQLAQLAQ). 235–240 (GNGKTM) provides a ligand contact to ATP.

It belongs to the AAA ATPase family. As to quaternary structure, homohexamer. Assembles into a hexameric ring structure.

The protein is AAA ATPase forming ring-shaped complexes of Bifidobacterium longum (strain DJO10A).